We begin with the raw amino-acid sequence, 175 residues long: General odorant-binding protein 84a (175 aa).

The signal sequence occupies residues 1–24 (MYSALVRACAVIAFLILSPNCARA). Disulfide bonds link Cys-103-Cys-151 and Cys-140-Cys-160.

In terms of tissue distribution, present only in a small number of hairs scattered over the surface of the funiculus.

The protein localises to the secreted. The polypeptide is General odorant-binding protein 84a (Obp84a) (Drosophila melanogaster (Fruit fly)).